A 162-amino-acid chain; its full sequence is Iron-sulfur cluster assembly protein IscU (162 aa).

The protein belongs to the NifU family. Homotrimer. Small proportion is monomeric. Interacts with IscS. Interacts with ABCB6. Component of a complex, at least composed of IscS, Isd11 and IscU. It depends on [4Fe-4S] cluster as a cofactor.

The protein resides in the mitochondrion. It participates in cofactor biosynthesis; iron-sulfur cluster biosynthesis. Its function is as follows. Participates in iron-sulfur cluster formation (ISC) pathway for iron-sulfur (Fe-S) cluster biogenesis. Plays a role of a major scaffold protein for [Fe-S] assembly; assembles [4Fe-4S] clusters directly upon interaction with the catalytic component IscS-Isd11 as part of the scaffold complex. Can transfer [4Fe-4S] clusters to target apo-proteins. The sequence is that of Iron-sulfur cluster assembly protein IscU from Plasmodium falciparum (isolate 3D7).